Consider the following 298-residue polypeptide: uncharacterized protein (298 aa).

An ABC transporter domain is found at 2 to 229 (LTIDHVTKTF…FGKKNVTIHS (228 aa)). 34-41 (GANGAGKT) is a binding site for ATP.

This sequence belongs to the ABC transporter superfamily.

It localises to the cell membrane. This is an uncharacterized protein from Bacillus subtilis (strain 168).